The following is a 284-amino-acid chain: Homeobox protein SIX1 (284 aa).

Residues 124 to 183 constitute a DNA-binding region (homeobox); sequence GEETSYCFKEKSRGVLREWYAHNPYPSPREKRELAEATGLTTTQVSNWFKNRRQRDRAAE. The interval 168–271 is disordered; the sequence is VSNWFKNRRQ…AHQHQLQDSL (104 aa). Positions 179–190 are enriched in basic and acidic residues; sequence DRAAEAKERENT. Polar residues predominate over residues 242–271; it reads RSSNYSLPGLTASQPSHGLQAHQHQLQDSL.

This sequence belongs to the SIX/Sine oculis homeobox family. In terms of assembly, interacts with DACH1. Interacts with EYA1. Interacts with EYA2. Interacts with CDH1. Interacts with TBX18. Interacts with CEBPA. Interacts with CEBPB. Interacts with EBF2. Post-translationally, phosphorylated during interphase; becomes hyperphosphorylated during mitosis. Hyperphosphorylation impairs binding to promoter elements. In terms of processing, ubiquitinated by the anaphase promoting complex (APC), leading to its proteasomal degradation.

Its subcellular location is the nucleus. The protein localises to the cytoplasm. Functionally, transcription factor that is involved in the regulation of cell proliferation, apoptosis and embryonic development. Plays an important role in the development of several organs, including kidney, muscle and inner ear. Depending on context, functions as a transcriptional repressor or activator. Lacks an activation domain, and requires interaction with EYA family members for transcription activation. Mediates nuclear translocation of EYA1 and EYA2. Binds the 5'-TCA[AG][AG]TTNC-3' motif present in the MEF3 element in the MYOG promoter and CIDEA enhancer. Regulates the expression of numerous genes, including MYC, CCNA1, CCND1 and EZR. Acts as an activator of the IGFBP5 promoter, probably coactivated by EYA2. Repression of precursor cell proliferation in myoblasts is switched to activation through recruitment of EYA3 to the SIX1-DACH1 complex. During myogenesis, seems to act together with EYA2 and DACH2. Regulates the expression of CCNA1. Promotes brown adipocyte differentiation. The polypeptide is Homeobox protein SIX1 (SIX1) (Lagothrix lagotricha (Brown woolly monkey)).